The primary structure comprises 328 residues: RNA-binding motif protein, X-linked 2 (328 aa).

A Glycyl lysine isopeptide (Lys-Gly) (interchain with G-Cter in SUMO2) cross-link involves residue K8. Residues 36–114 (AWIFLGGLPY…RTIRVDHVAN (79 aa)) form the RRM domain. The interval 118-328 (PQESEDVDDV…SFHASDRRHY (211 aa)) is disordered. T140 is subject to Phosphothreonine. S149 carries the phosphoserine modification. Over residues 157–172 (TKKPKKDKKEKKKKKE) the composition is skewed to basic residues. Composition is skewed to basic and acidic residues over residues 192 to 219 (TVKE…ECRE), 236 to 247 (GRAEEPEWEAKK), and 255 to 273 (KPSS…DRGR). A Glycyl lysine isopeptide (Lys-Gly) (interchain with G-Cter in SUMO2) cross-link involves residue K246. The residue at position 274 (S274) is a Phosphoserine. Basic residues predominate over residues 291–314 (HRSRSRSRSRSPDRSHRHKKHRYS). Positions 315-328 (HERESFHASDRRHY) are enriched in basic and acidic residues.

The protein belongs to the IST3 family. As to quaternary structure, part of the activated spliceosome B/catalytic step 1 spliceosome, one of the forms of the spliceosome which has a well-formed active site but still cannot catalyze the branching reaction and is composed of at least 52 proteins, the U2, U5 and U6 snRNAs and the pre-mRNA. Component of the minor spliceosome, which splices U12-type introns.

The protein localises to the nucleus. In terms of biological role, involved in pre-mRNA splicing as component of the activated spliceosome. As a component of the minor spliceosome, involved in the splicing of U12-type introns in pre-mRNAs. The polypeptide is RNA-binding motif protein, X-linked 2 (Rbmx2) (Rattus norvegicus (Rat)).